The primary structure comprises 1146 residues: Transcription-repair-coupling factor (1146 aa).

The region spanning 617 to 778 is the Helicase ATP-binding domain; that stretch reads DMCQPKAMDR…MNGIRDLSII (162 aa). 630–637 contacts ATP; that stretch reads GDVGFGKT. Positions 731–734 match the DEEH box motif; that stretch reads DEEH. The Helicase C-terminal domain occupies 800-953; that stretch reads VREAILREIL…GFILATHDLE (154 aa).

It in the N-terminal section; belongs to the UvrB family. In the C-terminal section; belongs to the helicase family. RecG subfamily.

It localises to the cytoplasm. Its function is as follows. Couples transcription and DNA repair by recognizing RNA polymerase (RNAP) stalled at DNA lesions. Mediates ATP-dependent release of RNAP and its truncated transcript from the DNA, and recruitment of nucleotide excision repair machinery to the damaged site. This is Transcription-repair-coupling factor from Haemophilus influenzae (strain ATCC 51907 / DSM 11121 / KW20 / Rd).